Reading from the N-terminus, the 212-residue chain is Large ribosomal subunit protein uL3 (212 aa).

This sequence belongs to the universal ribosomal protein uL3 family. Part of the 50S ribosomal subunit. Forms a cluster with proteins L14 and L19.

In terms of biological role, one of the primary rRNA binding proteins, it binds directly near the 3'-end of the 23S rRNA, where it nucleates assembly of the 50S subunit. This is Large ribosomal subunit protein uL3 from Acetivibrio thermocellus (strain ATCC 27405 / DSM 1237 / JCM 9322 / NBRC 103400 / NCIMB 10682 / NRRL B-4536 / VPI 7372) (Clostridium thermocellum).